We begin with the raw amino-acid sequence, 245 residues long: 3-deoxy-manno-octulosonate cytidylyltransferase (245 aa).

The protein belongs to the KdsB family.

Its subcellular location is the cytoplasm. It carries out the reaction 3-deoxy-alpha-D-manno-oct-2-ulosonate + CTP = CMP-3-deoxy-beta-D-manno-octulosonate + diphosphate. The protein operates within nucleotide-sugar biosynthesis; CMP-3-deoxy-D-manno-octulosonate biosynthesis; CMP-3-deoxy-D-manno-octulosonate from 3-deoxy-D-manno-octulosonate and CTP: step 1/1. Its pathway is bacterial outer membrane biogenesis; lipopolysaccharide biosynthesis. Functionally, activates KDO (a required 8-carbon sugar) for incorporation into bacterial lipopolysaccharide in Gram-negative bacteria. The polypeptide is 3-deoxy-manno-octulosonate cytidylyltransferase (Acaryochloris marina (strain MBIC 11017)).